The primary structure comprises 123 residues: Ribulose bisphosphate carboxylase small subunit, chloroplastic 1 (123 aa).

Residue Met1 is modified to Methionine derivative.

The protein belongs to the RuBisCO small chain family. As to quaternary structure, heterohexadecamer of 8 large and 8 small subunits.

The protein localises to the plastid. The protein resides in the chloroplast. Its function is as follows. RuBisCO catalyzes two reactions: the carboxylation of D-ribulose 1,5-bisphosphate, the primary event in carbon dioxide fixation, as well as the oxidative fragmentation of the pentose substrate. Both reactions occur simultaneously and in competition at the same active site. Although the small subunit is not catalytic it is essential for maximal activity. The protein is Ribulose bisphosphate carboxylase small subunit, chloroplastic 1 of Spinacia oleracea (Spinach).